The following is a 70-amino-acid chain: ATP synthase subunit c (70 aa).

2 helical membrane-spanning segments follow: residues 5–25 (AAAI…GLIV) and 47–67 (FIGV…AFMV).

The protein belongs to the ATPase C chain family. As to quaternary structure, F-type ATPases have 2 components, F(1) - the catalytic core - and F(0) - the membrane proton channel. F(1) has five subunits: alpha(3), beta(3), gamma(1), delta(1), epsilon(1). F(0) has three main subunits: a(1), b(2) and c(10-14). The alpha and beta chains form an alternating ring which encloses part of the gamma chain. F(1) is attached to F(0) by a central stalk formed by the gamma and epsilon chains, while a peripheral stalk is formed by the delta and b chains.

It localises to the cell membrane. F(1)F(0) ATP synthase produces ATP from ADP in the presence of a proton or sodium gradient. F-type ATPases consist of two structural domains, F(1) containing the extramembraneous catalytic core and F(0) containing the membrane proton channel, linked together by a central stalk and a peripheral stalk. During catalysis, ATP synthesis in the catalytic domain of F(1) is coupled via a rotary mechanism of the central stalk subunits to proton translocation. Functionally, key component of the F(0) channel; it plays a direct role in translocation across the membrane. A homomeric c-ring of between 10-14 subunits forms the central stalk rotor element with the F(1) delta and epsilon subunits. In Anoxybacillus flavithermus (strain DSM 21510 / WK1), this protein is ATP synthase subunit c.